The following is a 60-amino-acid chain: Large ribosomal subunit protein bL32 (60 aa).

The tract at residues methionine 1–threonine 23 is disordered. The segment covering histidine 7–tyrosine 20 has biased composition (basic residues).

The protein belongs to the bacterial ribosomal protein bL32 family.

The protein is Large ribosomal subunit protein bL32 of Streptococcus equi subsp. equi (strain 4047).